A 397-amino-acid chain; its full sequence is CCA-adding enzyme (397 aa).

Gly-8 and Arg-11 together coordinate ATP. Positions 8 and 11 each coordinate CTP. Residues Glu-21 and Asp-23 each coordinate Mg(2+). Residues Arg-91, Arg-137, and Arg-140 each coordinate ATP. CTP-binding residues include Arg-91, Arg-137, and Arg-140. One can recognise an HD domain in the interval 213–324 (NLDAAIATLK…LALFNGCDAW (112 aa)).

This sequence belongs to the tRNA nucleotidyltransferase/poly(A) polymerase family. Bacterial CCA-adding enzyme type 2 subfamily. The cofactor is Mg(2+).

It catalyses the reaction a tRNA precursor + 2 CTP + ATP = a tRNA with a 3' CCA end + 3 diphosphate. The enzyme catalyses a tRNA with a 3' CCA end + 2 CTP + ATP = a tRNA with a 3' CCACCA end + 3 diphosphate. Functionally, catalyzes the addition and repair of the essential 3'-terminal CCA sequence in tRNAs without using a nucleic acid template. Adds these three nucleotides in the order of C, C, and A to the tRNA nucleotide-73, using CTP and ATP as substrates and producing inorganic pyrophosphate. tRNA 3'-terminal CCA addition is required both for tRNA processing and repair. Also involved in tRNA surveillance by mediating tandem CCA addition to generate a CCACCA at the 3' terminus of unstable tRNAs. While stable tRNAs receive only 3'-terminal CCA, unstable tRNAs are marked with CCACCA and rapidly degraded. This is CCA-adding enzyme from Alteromonas mediterranea (strain DSM 17117 / CIP 110805 / LMG 28347 / Deep ecotype).